The sequence spans 339 residues: Phenylalanine--tRNA ligase alpha subunit (339 aa).

Position 250 (glutamate 250) interacts with Mg(2+).

The protein belongs to the class-II aminoacyl-tRNA synthetase family. Phe-tRNA synthetase alpha subunit type 1 subfamily. As to quaternary structure, tetramer of two alpha and two beta subunits. Mg(2+) serves as cofactor.

It is found in the cytoplasm. It catalyses the reaction tRNA(Phe) + L-phenylalanine + ATP = L-phenylalanyl-tRNA(Phe) + AMP + diphosphate + H(+). This is Phenylalanine--tRNA ligase alpha subunit from Azobacteroides pseudotrichonymphae genomovar. CFP2.